The chain runs to 335 residues: Fructose-1,6-bisphosphatase class 1 (335 aa).

The Mg(2+) site is built by glutamate 90, aspartate 113, leucine 115, and aspartate 116. Residues 116 to 119 (DGSS), asparagine 209, tyrosine 242, and lysine 272 contribute to the substrate site. Glutamate 278 serves as a coordination point for Mg(2+).

Belongs to the FBPase class 1 family. In terms of assembly, homotetramer. Requires Mg(2+) as cofactor.

The protein resides in the cytoplasm. It catalyses the reaction beta-D-fructose 1,6-bisphosphate + H2O = beta-D-fructose 6-phosphate + phosphate. It participates in carbohydrate biosynthesis; gluconeogenesis. This is Fructose-1,6-bisphosphatase class 1 from Histophilus somni (strain 2336) (Haemophilus somnus).